The primary structure comprises 174 residues: Crossover junction endodeoxyribonuclease RuvC (174 aa).

Catalysis depends on residues D8, E67, and D139. Positions 8, 67, and 139 each coordinate Mg(2+).

The protein belongs to the RuvC family. As to quaternary structure, homodimer which binds Holliday junction (HJ) DNA. The HJ becomes 2-fold symmetrical on binding to RuvC with unstacked arms; it has a different conformation from HJ DNA in complex with RuvA. In the full resolvosome a probable DNA-RuvA(4)-RuvB(12)-RuvC(2) complex forms which resolves the HJ. Requires Mg(2+) as cofactor.

The protein resides in the cytoplasm. It carries out the reaction Endonucleolytic cleavage at a junction such as a reciprocal single-stranded crossover between two homologous DNA duplexes (Holliday junction).. The RuvA-RuvB-RuvC complex processes Holliday junction (HJ) DNA during genetic recombination and DNA repair. Endonuclease that resolves HJ intermediates. Cleaves cruciform DNA by making single-stranded nicks across the HJ at symmetrical positions within the homologous arms, yielding a 5'-phosphate and a 3'-hydroxyl group; requires a central core of homology in the junction. The consensus cleavage sequence is 5'-(A/T)TT(C/G)-3'. Cleavage occurs on the 3'-side of the TT dinucleotide at the point of strand exchange. HJ branch migration catalyzed by RuvA-RuvB allows RuvC to scan DNA until it finds its consensus sequence, where it cleaves and resolves the cruciform DNA. This Pseudomonas putida (strain W619) protein is Crossover junction endodeoxyribonuclease RuvC.